The primary structure comprises 511 residues: GMP synthase [glutamine-hydrolyzing] (511 aa).

Positions 5–195 constitute a Glutamine amidotransferase type-1 domain; sequence PIVVLDFGSQ…AKHICGCEST (191 aa). C82 functions as the Nucleophile in the catalytic mechanism. Catalysis depends on residues H169 and E171. A GMPS ATP-PPase domain is found at 196–386; that stretch reads WNMGSFAKEQ…LGLPKSMISR (191 aa). 223–229 contributes to the ATP binding site; it reads SGGVDSS.

In terms of assembly, homodimer.

The catalysed reaction is XMP + L-glutamine + ATP + H2O = GMP + L-glutamate + AMP + diphosphate + 2 H(+). The protein operates within purine metabolism; GMP biosynthesis; GMP from XMP (L-Gln route): step 1/1. Catalyzes the synthesis of GMP from XMP. This is GMP synthase [glutamine-hydrolyzing] from Aliarcobacter butzleri (strain RM4018) (Arcobacter butzleri).